The primary structure comprises 141 residues: Hemoglobin subunit alpha-A (141 aa).

Residues 1–141 (VLSAADKNNV…VGTVLTAKYR (141 aa)) enclose the Globin domain. Residue His-58 coordinates O2. His-87 is a heme b binding site.

The protein belongs to the globin family. In terms of assembly, heterotetramer of two alpha chains and two beta chains. In terms of tissue distribution, red blood cells.

In terms of biological role, involved in oxygen transport from the lung to the various peripheral tissues. The polypeptide is Hemoglobin subunit alpha-A (HBAA) (Phasianus colchicus colchicus (Black-necked pheasant)).